Consider the following 434-residue polypeptide: Histidinol dehydrogenase (434 aa).

Residues Tyr130, Gln188, and Asn211 each contribute to the NAD(+) site. Residues Ser237, Gln259, and His262 each coordinate substrate. Residues Gln259 and His262 each contribute to the Zn(2+) site. Residues Glu326 and His327 each act as proton acceptor in the active site. His327, Asp360, Glu414, and His419 together coordinate substrate. Asp360 contacts Zn(2+). His419 serves as a coordination point for Zn(2+).

Belongs to the histidinol dehydrogenase family. In terms of assembly, homodimer. The cofactor is Zn(2+).

It catalyses the reaction L-histidinol + 2 NAD(+) + H2O = L-histidine + 2 NADH + 3 H(+). It functions in the pathway amino-acid biosynthesis; L-histidine biosynthesis; L-histidine from 5-phospho-alpha-D-ribose 1-diphosphate: step 9/9. Catalyzes the sequential NAD-dependent oxidations of L-histidinol to L-histidinaldehyde and then to L-histidine. The chain is Histidinol dehydrogenase from Escherichia coli (strain K12).